Here is a 561-residue protein sequence, read N- to C-terminus: Probable oligo-1,6-glucosidase 2 (561 aa).

Residue aspartate 199 is the Nucleophile of the active site. Residue glutamate 255 is the Proton donor of the active site.

It belongs to the glycosyl hydrolase 13 family.

The protein resides in the cytoplasm. It catalyses the reaction Hydrolysis of (1-&gt;6)-alpha-D-glucosidic linkages in some oligosaccharides produced from starch and glycogen by alpha-amylase, and in isomaltose.. The polypeptide is Probable oligo-1,6-glucosidase 2 (ycdG) (Bacillus subtilis (strain 168)).